Reading from the N-terminus, the 399-residue chain is Phosphoglycerate kinase (399 aa).

Substrate contacts are provided by residues 22-24 (DFN), R38, 61-64 (HLGR), R120, and R153. Residues K204, E326, and 352 to 355 (GGDT) each bind ATP.

It belongs to the phosphoglycerate kinase family. In terms of assembly, monomer.

The protein localises to the cytoplasm. It catalyses the reaction (2R)-3-phosphoglycerate + ATP = (2R)-3-phospho-glyceroyl phosphate + ADP. It functions in the pathway carbohydrate degradation; glycolysis; pyruvate from D-glyceraldehyde 3-phosphate: step 2/5. The chain is Phosphoglycerate kinase from Geobacter sp. (strain M21).